Reading from the N-terminus, the 204-residue chain is Large ribosomal subunit protein uL4 (204 aa).

Positions threonine 49 to serine 75 are disordered.

Belongs to the universal ribosomal protein uL4 family. In terms of assembly, part of the 50S ribosomal subunit.

In terms of biological role, one of the primary rRNA binding proteins, this protein initially binds near the 5'-end of the 23S rRNA. It is important during the early stages of 50S assembly. It makes multiple contacts with different domains of the 23S rRNA in the assembled 50S subunit and ribosome. Its function is as follows. Forms part of the polypeptide exit tunnel. This is Large ribosomal subunit protein uL4 from Campylobacter jejuni (strain RM1221).